Reading from the N-terminus, the 117-residue chain is Mitochondrial zinc maintenance protein 1, mitochondrial (117 aa).

The transit peptide at 1 to 10 (MSATLSAYRN) directs the protein to the mitochondrion. The interval 91–117 (NESIKQGKKNLGSLAGKKGSSIRSCKD) is disordered.

Belongs to the complex I LYR family. MZM1 subfamily. In terms of assembly, interacts with RIP1.

The protein resides in the mitochondrion matrix. Its function is as follows. Assembly factor required for Rieske Fe-S protein RIP1 incorporation into the cytochrome b-c1 (CIII) complex. Functions as a chaperone, binding to this subunit within the mitochondrial matrix and stabilizing it prior to its translocation and insertion into the late CIII dimeric intermediate within the mitochondrial inner membrane. Modulates the mitochondrial matrix zinc pool. This Candida tropicalis (strain ATCC MYA-3404 / T1) (Yeast) protein is Mitochondrial zinc maintenance protein 1, mitochondrial (MZM1).